The sequence spans 298 residues: Protease HtpX homolog (298 aa).

Transmembrane regions (helical) follow at residues 14–34 (VVLL…AGYL) and 39–59 (YAMG…SMIF). H143 is a binding site for Zn(2+). E144 is an active-site residue. H147 is a binding site for Zn(2+). Helical transmembrane passes span 158–178 (IAVA…RMLW) and 197–217 (IITL…ASLI). E226 is a Zn(2+) binding site.

It belongs to the peptidase M48B family. Zn(2+) is required as a cofactor.

Its subcellular location is the cell membrane. This chain is Protease HtpX homolog, found in Streptococcus pyogenes serotype M3 (strain SSI-1).